Consider the following 130-residue polypeptide: uncharacterized protein (130 aa).

Residues 41 to 64 (DDKDDHMDNQPKTSQTSKKVKLSE) are disordered.

This is an uncharacterized protein from Streptococcus pyogenes serotype M6 (strain ATCC BAA-946 / MGAS10394).